The sequence spans 198 residues: Small ribosomal subunit protein uS4 (198 aa).

In terms of domain architecture, S4 RNA-binding spans 88 to 153 (LRLDNVMFRM…AQRYKDILEV (66 aa)).

The protein belongs to the universal ribosomal protein uS4 family. Part of the 30S ribosomal subunit. Contacts protein S5. The interaction surface between S4 and S5 is involved in control of translational fidelity.

Its function is as follows. One of the primary rRNA binding proteins, it binds directly to 16S rRNA where it nucleates assembly of the body of the 30S subunit. In terms of biological role, with S5 and S12 plays an important role in translational accuracy. The protein is Small ribosomal subunit protein uS4 of Lachnoclostridium phytofermentans (strain ATCC 700394 / DSM 18823 / ISDg) (Clostridium phytofermentans).